A 375-amino-acid polypeptide reads, in one-letter code: tRNA-specific 2-thiouridylase MnmA (375 aa).

Residues 18-25 (GMSGGVDS) and Met-44 each bind ATP. Residues 104–106 (NPD) are interaction with target base in tRNA. Cys-109 functions as the Nucleophile in the catalytic mechanism. Cys-109 and Cys-206 are disulfide-bonded. Gly-134 contacts ATP. The segment at 156 to 158 (KDQ) is interaction with tRNA. Cys-206 acts as the Cysteine persulfide intermediate in catalysis. An interaction with tRNA region spans residues 318–319 (RY).

It belongs to the MnmA/TRMU family.

The protein resides in the cytoplasm. It carries out the reaction S-sulfanyl-L-cysteinyl-[protein] + uridine(34) in tRNA + AH2 + ATP = 2-thiouridine(34) in tRNA + L-cysteinyl-[protein] + A + AMP + diphosphate + H(+). Its function is as follows. Catalyzes the 2-thiolation of uridine at the wobble position (U34) of tRNA, leading to the formation of s(2)U34. This is tRNA-specific 2-thiouridylase MnmA from Colwellia psychrerythraea (strain 34H / ATCC BAA-681) (Vibrio psychroerythus).